We begin with the raw amino-acid sequence, 403 residues long: GPI-N-acetylgalactosamine transferase PGAP4 (403 aa).

The Cytoplasmic portion of the chain corresponds to 1 to 22 (MTTSTSPAAMLLRRLRRLSWGS). The chain crosses the membrane as a helical span at residues 23–43 (TAVQLFILTVVTFGLLAPLAC). The Lumenal segment spans residues 44–264 (HRLLHSYFYL…INPEPMRILE (221 aa)). UDP-N-acetyl-alpha-D-galactosamine is bound at residue valine 109. Intrachain disulfides connect cysteine 132-cysteine 136 and cysteine 144-cysteine 194. A DXD motif motif is present at residues 211 to 213 (EDD). The helical transmembrane segment at 265 to 285 (WVGVGMLLGPVLTWIYMRFAC) threads the bilayer. Over 286-287 (RP) the chain is Cytoplasmic. A helical transmembrane segment spans residues 288-308 (GFSWPVMLFFCLYSMGLVELV). Residues 309 to 403 (GRHYFLELRR…LRYNFHPSLL (95 aa)) are Lumenal-facing. The cysteines at positions 332 and 333 are disulfide-linked. Threonine 334, proline 335, and lysine 362 together coordinate UDP-N-acetyl-alpha-D-galactosamine.

It belongs to the PGAP4 family. Post-translationally, glycosylated.

It localises to the golgi apparatus membrane. Its function is as follows. Golgi-resident glycosylphosphatidylinositol (GPI)-N-acetylgalactosamine transferase that catalyzes the N-acetyl-beta-D-galactosamine transfer from an UDP-N-acetyl-alpha-D-galactosamine to the 4-OH-position of first mannose of the glycosylphosphatidylinositol (GPI) of a GPI-anchored protein (GPI-AP). This modification occurs after the fatty acid remodeling step of the GPI-anchor maturation. The chain is GPI-N-acetylgalactosamine transferase PGAP4 from Mus musculus (Mouse).